Reading from the N-terminus, the 212-residue chain is MKNVKIALTKGRLEKKAIEIFKTININTRELEDKGRKLIFNCENEEYNIELFLVKAKDVETYVEYGAADIGIVGKDTLMETNKEFYEVLDLNVGKCKFALAALPSFKLDQGYNMKKIATKYPNIAREYFRKKGMDVELIKIEGSVELGPIVGLADAIVDIVETGNTLRENGLVVVEDICEISARMIVNKASMKTKKDEIIKIIENVSEVIRQ.

This sequence belongs to the ATP phosphoribosyltransferase family. Short subfamily. In terms of assembly, heteromultimer composed of HisG and HisZ subunits.

The protein localises to the cytoplasm. It carries out the reaction 1-(5-phospho-beta-D-ribosyl)-ATP + diphosphate = 5-phospho-alpha-D-ribose 1-diphosphate + ATP. The protein operates within amino-acid biosynthesis; L-histidine biosynthesis; L-histidine from 5-phospho-alpha-D-ribose 1-diphosphate: step 1/9. Its function is as follows. Catalyzes the condensation of ATP and 5-phosphoribose 1-diphosphate to form N'-(5'-phosphoribosyl)-ATP (PR-ATP). Has a crucial role in the pathway because the rate of histidine biosynthesis seems to be controlled primarily by regulation of HisG enzymatic activity. This chain is ATP phosphoribosyltransferase, found in Clostridium botulinum (strain Okra / Type B1).